The chain runs to 184 residues: uncharacterized protein (184 aa).

This is an uncharacterized protein from Caenorhabditis elegans.